Here is a 260-residue protein sequence, read N- to C-terminus: Probable carbohydrate esterase At4g34215 (260 aa).

The tract at residues 1-22 is disordered; sequence MEGGSITPGEDKPEIQSPIPPN. Catalysis depends on residues Ser-31, Asp-235, and His-238.

It belongs to the carbohydrate esterase 6 family.

This chain is Probable carbohydrate esterase At4g34215, found in Arabidopsis thaliana (Mouse-ear cress).